Consider the following 216-residue polypeptide: Probable RNA 2'-phosphotransferase 2 (216 aa).

This sequence belongs to the KptA/TPT1 family.

Its function is as follows. Removes the 2'-phosphate from RNA via an intermediate in which the phosphate is ADP-ribosylated by NAD followed by a presumed transesterification to release the RNA and generate ADP-ribose 1''-2''-cyclic phosphate (APPR&gt;P). May function as an ADP-ribosylase. This Archaeoglobus fulgidus (strain ATCC 49558 / DSM 4304 / JCM 9628 / NBRC 100126 / VC-16) protein is Probable RNA 2'-phosphotransferase 2 (kptA2).